A 323-amino-acid polypeptide reads, in one-letter code: UPF0065 protein BP0148 (323 aa).

The signal sequence occupies residues 1–24; sequence MKPFSLLRRIATIALLMAASSAHA.

Belongs to the UPF0065 (bug) family.

It is found in the periplasm. The sequence is that of UPF0065 protein BP0148 from Bordetella pertussis (strain Tohama I / ATCC BAA-589 / NCTC 13251).